A 1219-amino-acid polypeptide reads, in one-letter code: MSSNIINAITGELITIDITLFISLNEFKKFLINRWQIDFNNLLLLLPFGNKINDRIFIDLIGKKNDQSTIYVFDRRLFSLVNNPDNELSSDYLTNIKNLLKGINHPTNNLNQLVKPVNSPYEEVEINEKFLNYHTITSLITTNLGWLSALEIDMHYFQIQISDTLDYIKNIIESLKICQNYLELYCYDVENLYNSNVKFLNQLANNEILKNWLNYYDNILTKLSDINGNKLSSYLNKNELVSISSKIEELDQRVNSNLKKFKIVIDKNIDLRNNINKEISSLSEKITPSSEKYKLEETMLEKFTELVKNLRNDSKVILEKDENEFDKNYMQNLAKSLEKDKKVTVTNLLTISKALYSQANDISEIKSKLQVDSIKLFGQISFIQIETLNIKKLLLNELNKDLEKYQGFELKLAHVQDIPLVYGLYSIENYRRESWVLQINYKHLDFNKSLKTIVEKEKSTRNKWVDNFGSTAVYFTEDMDTLRDFNYLNNIAKGNQSMIKKLEELFKNISNESHNKNLVFIETYIKEVEDLDLDKDVIELFKRYLAVAQGFVIEQPSTKNIISDKETGELINGYQSRIKKLELLLHSARYSNVESWPTGLLNYSNVKLFRNNVATVNSKLSLQSDYMGNISYGSDQLRIKELENVNKQYKTDFKALTDENKLLKDKVTKFNTDISDIQIERNAYKETLTKLNEELSRLTSIEGDFEKHKGEKEIELKIKIDGLVDSNKTLLNQISDLKIESKELESSNRDLLAQLNQKREEHKVLEDSLKQRENEGLRYKDEYEAKLKELTEKFEADRRALEDEIKAAKEQNMKESMEQQTEQSANQSIDQSIEQSTEQSTEQSTEQSMEQSMEQSMEQSVEQSMEHSMEHSMEQSEKQNMGQNDATIDNQSIETPTSEDMHSLDEQSPESQLLKSNTTELQPIKSQELAEDSKAIELKNIQEMLVSKLYEIFSSNVFILENIGLLLTFDEHDNFQIRRVKGLKKNLNQSVLEETGLLNEIEMPVKSDVFSEVKTLFSNYKETFDSRSYISLLSKINQLYDCKLYETAVIKRFEDIELLAKKLAKENKAKKNLFEKYRCERITLKNFEVGDLALFLPTRENCITEDVSVASWNSSFSSVDLSTPPPFGEPITNQSHSGTAKDKNKHNLEKRPWAAFTAFEETARYFLKDPENIPNNREWFVGKIMHLQRFVVEDHISNPYKLPKGAVWFQVTATVVSHQ.

Residues 636–824 (QLRIKELENV…ESMEQQTEQS (189 aa)) adopt a coiled-coil conformation. 2 disordered regions span residues 811–882 (QNMK…QNMG) and 895–926 (TPTS…PIKS). Residues 818-830 (EQQTEQSANQSID) show a composition bias toward polar residues. Residues 831–863 (QSIEQSTEQSTEQSTEQSMEQSMEQSMEQSVEQ) show a composition bias toward low complexity. Positions 864-877 (SMEHSMEHSMEQSE) are enriched in basic and acidic residues. Residues 909–925 (PESQLLKSNTTELQPIK) show a composition bias toward polar residues. Residues 1052 to 1081 (RFEDIELLAKKLAKENKAKKNLFEKYRCER) are a coiled coil.

Belongs to the ATG11 family. Homodimer.

The protein resides in the preautophagosomal structure membrane. The protein localises to the vacuole membrane. In terms of biological role, involved in cytoplasm to vacuole transport (Cvt), pexophagy, mitophagy and nucleophagy. Recruits mitochondria for their selective degradation via autophagy (mitophagy) during starvation. Works as scaffold proteins that recruit ATG proteins to the pre-autophagosome (PAS), the site of vesicle/autophagosome formation. Required for the Cvt vesicles completion. This chain is Autophagy-related protein 11 (ATG11), found in Vanderwaltozyma polyspora (strain ATCC 22028 / DSM 70294 / BCRC 21397 / CBS 2163 / NBRC 10782 / NRRL Y-8283 / UCD 57-17) (Kluyveromyces polysporus).